Here is an 89-residue protein sequence, read N- to C-terminus: Protein RALF-like 5 (89 aa).

An N-terminal signal peptide occupies residues 1-25 (MLKAQVFMFVTVLVFVCVFINSNDA). Disulfide bonds link Cys39–Cys48 and Cys61–Cys67.

It belongs to the plant rapid alkalinization factor (RALF) family.

It localises to the secreted. Its function is as follows. Cell signaling peptide that may regulate plant stress, growth, and development. Mediates a rapid alkalinization of extracellular space by mediating a transient increase in the cytoplasmic Ca(2+) concentration leading to a calcium-dependent signaling events through a cell surface receptor and a concomitant activation of some intracellular mitogen-activated protein kinases. This chain is Protein RALF-like 5 (RALFL5), found in Arabidopsis thaliana (Mouse-ear cress).